The chain runs to 291 residues: Elongation factor Ts (291 aa).

Residues 79–82 form an involved in Mg(2+) ion dislocation from EF-Tu region; sequence TDFV.

Belongs to the EF-Ts family.

The protein resides in the cytoplasm. Its function is as follows. Associates with the EF-Tu.GDP complex and induces the exchange of GDP to GTP. It remains bound to the aminoacyl-tRNA.EF-Tu.GTP complex up to the GTP hydrolysis stage on the ribosome. The sequence is that of Elongation factor Ts from Anaplasma marginale (strain Florida).